The primary structure comprises 399 residues: E3 ubiquitin-protein ligase APD4 (399 aa).

A run of 2 helical transmembrane segments spans residues 42 to 62 (FGII…GVYG) and 284 to 304 (LIAY…AIHF). Residues 348 to 387 (CAICFDAPRDCCFLPCGHCVSCYQCGTKIKRTKGRCPICR) form an RING-type zinc finger.

In terms of tissue distribution, expressed in the shoot apical meristems (SAM), root tips and inflorescences.

It localises to the endomembrane system. The protein localises to the vacuole membrane. It carries out the reaction S-ubiquitinyl-[E2 ubiquitin-conjugating enzyme]-L-cysteine + [acceptor protein]-L-lysine = [E2 ubiquitin-conjugating enzyme]-L-cysteine + N(6)-ubiquitinyl-[acceptor protein]-L-lysine.. It participates in protein modification; protein ubiquitination. In terms of biological role, involved in pollen mitosis II (PMII) regulation during male gametogenesis. The sequence is that of E3 ubiquitin-protein ligase APD4 from Arabidopsis thaliana (Mouse-ear cress).